We begin with the raw amino-acid sequence, 155 residues long: Small ribosomal subunit protein uS7 (155 aa).

It belongs to the universal ribosomal protein uS7 family. In terms of assembly, part of the 30S ribosomal subunit. Contacts proteins S9 and S11.

Functionally, one of the primary rRNA binding proteins, it binds directly to 16S rRNA where it nucleates assembly of the head domain of the 30S subunit. Is located at the subunit interface close to the decoding center, probably blocks exit of the E-site tRNA. This chain is Small ribosomal subunit protein uS7, found in Xanthomonas campestris pv. campestris (strain 8004).